Consider the following 111-residue polypeptide: Ghrelin (111 aa).

The N-terminal stretch at 1 to 26 is a signal peptide; the sequence is MRQMKRTAYIILLVCVLALWMDSVQA. Polar residues predominate over residues 28 to 37; sequence SSFLSPSQRP. The interval 28 to 53 is disordered; that stretch reads SSFLSPSQRPQGKDKKPPRVGRRDSD. A lipid anchor (O-decanoyl serine; alternate) is attached at Ser29. Ser29 is lipidated: O-hexanoyl serine; alternate. A lipid anchor (O-octanoyl serine; alternate) is attached at Ser29. Over residues 38 to 53 the composition is skewed to basic and acidic residues; sequence QGKDKKPPRVGRRDSD. Val47 carries the valine amide modification. A propeptide spans 51 to 111 (removed in mature form); the sequence is DSDGILDLFM…DLLMDTPAKE (61 aa).

Belongs to the motilin family. O-octanoylated by GOAT/MBOAT4. O-octanoylation or O-decanoylation is essential for activity. The O-decanoylated form ghrelin-21-C10 differs in the length of the carbon backbone of the carboxylic acid forming an ester bond with Ser-29. 44% of eel ghrelin is O-decanoylated. In terms of tissue distribution, highest levels in stomach and anterior intestine. Lower levels in posterior intestine, kidney and brain. Low levels in heart, head kidney and middle intestine.

It localises to the secreted. Functionally, ligand for growth hormone secretagogue receptor type 1 (GHSR). Induces the release of growth hormone from the pituitary. Has an appetite-stimulating effect, induces adiposity and stimulates gastric acid secretion. Involved in growth regulation. This chain is Ghrelin (ghrl), found in Anguilla japonica (Japanese eel).